The chain runs to 345 residues: MSNMMKALVKSKPEVGLWMENVPVPEVGPNDVLIRVKKSAICGTDVHIWNWDQWAQKTIPVPMVVGHEFSGEIAEIGSAVTRYHVGERVSGEGHIVCGKCRNCRAGRGHLCRNTLGVGVNRPGSFGEFVCIPESNVVPIPDDISDEIAAIFDPFGNAVHTALSFDLVGEDVLVTGAGPIGIMGALVAKRSGARKVVITDINPHRLDLARKLGIDHVVDASKENLADVMKAIGMTEGFDVGLEMSGAAPAFRDMIDKMNNGGKIAILGIAPAGFEIDWNKVIFKMLNLKGIYGREMFETWYKMIAFVQGGLDLSPIITHRIKIDDFRDGFEAMRSGNSGKVVMDWM.

C42 is a Zn(2+) binding site. Active-site charge relay system residues include T44 and H47. Residues H67, E68, C97, C100, C103, and C111 each contribute to the Zn(2+) site. Residues I179, D199, R204, 266–268, and 290–291 each bind NAD(+); these read LGI and IY.

This sequence belongs to the zinc-containing alcohol dehydrogenase family. Homotetramer. It depends on Zn(2+) as a cofactor.

The protein localises to the cytoplasm. It carries out the reaction L-threonine + NAD(+) = (2S)-2-amino-3-oxobutanoate + NADH + H(+). It functions in the pathway amino-acid degradation; L-threonine degradation via oxydo-reductase pathway; glycine from L-threonine: step 1/2. Catalyzes the NAD(+)-dependent oxidation of L-threonine to 2-amino-3-ketobutyrate. This is L-threonine 3-dehydrogenase from Rhizobium etli (strain ATCC 51251 / DSM 11541 / JCM 21823 / NBRC 15573 / CFN 42).